Reading from the N-terminus, the 711-residue chain is Polyribonucleotide nucleotidyltransferase (711 aa).

D490 and D496 together coordinate Mg(2+). Residues 556 to 615 form the KH domain; sequence PRIETMQIPTDKIREVIGSGGKVIREIVEVSGAKVDINDEGIIKIASPNGEAIKKAYDMI. In terms of domain architecture, S1 motif spans 625 to 693; the sequence is GMVYTGTVVK…DRGKVRLSMK (69 aa).

The protein belongs to the polyribonucleotide nucleotidyltransferase family. Mg(2+) is required as a cofactor.

It localises to the cytoplasm. It catalyses the reaction RNA(n+1) + phosphate = RNA(n) + a ribonucleoside 5'-diphosphate. Functionally, involved in mRNA degradation. Catalyzes the phosphorolysis of single-stranded polyribonucleotides processively in the 3'- to 5'-direction. The polypeptide is Polyribonucleotide nucleotidyltransferase (Roseobacter denitrificans (strain ATCC 33942 / OCh 114) (Erythrobacter sp. (strain OCh 114))).